Here is a 567-residue protein sequence, read N- to C-terminus: Proline--tRNA ligase (567 aa).

Belongs to the class-II aminoacyl-tRNA synthetase family. ProS type 1 subfamily. As to quaternary structure, homodimer.

It is found in the cytoplasm. The catalysed reaction is tRNA(Pro) + L-proline + ATP = L-prolyl-tRNA(Pro) + AMP + diphosphate. Its function is as follows. Catalyzes the attachment of proline to tRNA(Pro) in a two-step reaction: proline is first activated by ATP to form Pro-AMP and then transferred to the acceptor end of tRNA(Pro). As ProRS can inadvertently accommodate and process non-cognate amino acids such as alanine and cysteine, to avoid such errors it has two additional distinct editing activities against alanine. One activity is designated as 'pretransfer' editing and involves the tRNA(Pro)-independent hydrolysis of activated Ala-AMP. The other activity is designated 'posttransfer' editing and involves deacylation of mischarged Ala-tRNA(Pro). The misacylated Cys-tRNA(Pro) is not edited by ProRS. This chain is Proline--tRNA ligase, found in Campylobacter curvus (strain 525.92).